An 837-amino-acid polypeptide reads, in one-letter code: Outer membrane usher protein PsaC (837 aa).

The first 23 residues, 1-23 (MKKLIVQFTTITLLMSTSFLVGA), serve as a signal peptide directing secretion.

This sequence belongs to the fimbrial export usher family.

It is found in the cell outer membrane. Involved in the export and assembly of PsaA (pH 6) fimbrial subunits across the outer membrane. The protein is Outer membrane usher protein PsaC (psaC) of Yersinia pestis.